A 317-amino-acid chain; its full sequence is Small glutamine-rich tetratricopeptide repeat-containing protein 2 (317 aa).

4 TPR repeats span residues 14-48 (LKQA…KPEE), 83-116 (AEKL…DPTS), 118-150 (VYYS…DPHH), and 151-184 (ARAF…DPNN). Positions 198–215 (LNQPSDSSATSGADQART) are enriched in polar residues. Disordered stretches follow at residues 198–224 (LNQP…PDLG) and 298–317 (MNNN…PPPQ).

It belongs to the SGT family.

It is found in the cytoplasm. Its subcellular location is the nucleus. Co-chaperone that binds to the molecular chaperone Hsp70 and regulates Hsp70 ATPase activity. This is Small glutamine-rich tetratricopeptide repeat-containing protein 2 (sgt2) from Schizosaccharomyces pombe (strain 972 / ATCC 24843) (Fission yeast).